Consider the following 753-residue polypeptide: Metal regulatory transcription factor 1 (753 aa).

Glycine 2 carries the N-acetylglycine modification. Serine 5 bears the Phosphoserine mark. Positions 133–138 match the Nuclear localization signal motif; that stretch reads KRKEVK. C2H2-type zinc fingers lie at residues 140–164, 170–194, 200–224, 229–253, 259–283, and 289–313; these read YQCT…QKTH, FVCN…VRVH, FECD…QRLH, FNCE…IRTH, FRCD…VRTH, and FFCP…MKGH. The residue at position 305 (serine 305) is a Phosphoserine. 3 disordered regions span residues 308 to 328, 395 to 466, and 648 to 715; these read SHMK…QHNG, ESFN…ALLQ, and SRRK…LSAM. Polar residues predominate over residues 408 to 417; it reads PPSTGNSASL. Over residues 655–666 the composition is skewed to pro residues; the sequence is SPPPPEPSPQAP. Over residues 679–698 the composition is skewed to low complexity; it reads SSAPVPGSSSSTLPSSCEQS. A compositionally biased stretch (polar residues) spans 700–712; the sequence is QAETPSDPQTETL.

Its subcellular location is the nucleus. The protein resides in the cytoplasm. Zinc-dependent transcriptional regulator of cellular adaption to conditions of exposure to heavy metals. Binds to metal responsive elements (MRE) in promoters and activates the transcription of metallothionein genes like metallothionein-2/MT2A. Also regulates the expression of metalloproteases in response to intracellular zinc and functions as a catabolic regulator of cartilages. The sequence is that of Metal regulatory transcription factor 1 (MTF1) from Homo sapiens (Human).